A 407-amino-acid chain; its full sequence is MSAATATAAPVPPPVGISNLPNQRYKIVNEEGGTFTVMLCGESGLGKTTFINTLFQTVLKRADGQQHRQEPIRKTVEIDITRALLEEKHFELRVNVIDTPGFGDNVNNNKAWQPLVDFIDDQHDSYMRQEQQPYRTKKFDLRVHAVLYFIRPTGHGLKPIDIETMKRLSTRANLIPVIAKADTLTAQELQQFKSRIRQVIEAQEIRIFTPPLDADSKEDAKSGSNPDSAAVEHARQLIEAMPFAIVGSEKKFDNGQGTQVVARKYPWGLVEIENDSHCDFRKLRALLLRTYLLDLISTTQEMHYETYRRLRLEGHENTGEGNEDFTLPAIAPARKLSHNPRYKEEENALKKYFTDQVKAEEQRFRQWEQNIVNERIRLNGDLEEIQGKVKKLEEQVKSLQVKKSHLK.

Residue Ser-2 is modified to N-acetylserine. Residues 31-314 enclose the Septin-type G domain; the sequence is EGGTFTVMLC…ETYRRLRLEG (284 aa). Residues 41-48 form a G1 motif region; the sequence is GESGLGKT. Residues 41-48, Thr-75, Gly-101, 180-188, Gly-247, and Arg-263 contribute to the GTP site; these read GESGLGKT and KADTLTAQE. The segment at 98–101 is G3 motif; it reads DTPG. A G4 motif region spans residues 179–182; the sequence is AKAD. Positions 344-406 form a coiled coil; sequence EEENALKKYF…KSLQVKKSHL (63 aa).

This sequence belongs to the TRAFAC class TrmE-Era-EngA-EngB-Septin-like GTPase superfamily. Septin GTPase family. As to quaternary structure, component of the septin complex which consists of CDC3, CDC10, CDC11, CDC12 and probably SHS1 and rearranges to a cortical collar of highly ordered filaments at the mother-bud-neck. A complex formed by CDC3, CDC10, CDC11 and CDC12 is capable of forming long filaments in vitro and the components seem to be present in a 2:2:2:2 arrangement in vivo. The filaments are proposed to be formed by the end-to-end polymerization of CDC3-CDC12-CDC11 complexes with CDC10 serving as a bridge to bundle the polymers into paired filaments. Component of the GIN4 complex composed of at least BNI5, CDC3, CDC10, CDC11, CDC12, GIN4, NAP1 and SHS1. Self-associates. Interacts with SYP1.

It is found in the membrane. The protein resides in the bud neck. Its function is as follows. Septins are GTPases involved in cytokinesis that assemble early in the cell cycle as a patch at the incipient bud site and form a ring approximate 15 minutes before bud emergence, which transforms into an hour-glass shaped collar of cortical filaments that spans both sides of the mother-bud neck. This collar persists until just before cytokinesis, when it splits into two rings that occupy opposite sides of the neck. The septins at the bud neck serve as a structural scaffold that recruits different components involved in diverse processes at specific stages during the cell cycle. Many proteins bind asymmetrically to the septin collar. The septin assembly is regulated by protein kinases GIN4 and/or CLA4. May act by recruiting MYO1 and HOF1, a protein involved in septation, to the site of cleavage. Septins are also involved in cell morphogenesis, bud site selection, chitin deposition, cell cycle regulation, cell compartmentalization and spore wall formation. This chain is Cell division control protein 12 (CDC12), found in Saccharomyces cerevisiae (strain ATCC 204508 / S288c) (Baker's yeast).